The primary structure comprises 263 residues: Rhomboid-like protease 3 (263 aa).

The next 6 helical transmembrane spans lie at 37–57 (KSIVWITVAQIIMYIISCVLS), 86–106 (VVTPLFLHATILHLVLNLVFI), 121–141 (KFLVTYFLSAIVGNLLSMLMQ), 142–162 (PWALSVGASTAGFGIIGGMAA), 189–209 (LIYFLSFGRTVDTFGHLGGFL), and 231–251 (VLFYGCSALCATILVVSPPLL). The active-site Nucleophile is the Ser150. His204 is a catalytic residue.

Belongs to the peptidase S54 family.

It localises to the membrane. It catalyses the reaction Cleaves type-1 transmembrane domains using a catalytic dyad composed of serine and histidine that are contributed by different transmembrane domains.. Functionally, serine protease involved in intramembrane proteolysis and the subsequent release of polypeptides from their membrane anchors. In Toxoplasma gondii, this protein is Rhomboid-like protease 3 (ROM3).